Consider the following 408-residue polypeptide: Argininosuccinate synthase (408 aa).

ATP-binding positions include 11 to 19 (AYSGGLDTS) and Ala38. Residues Tyr91 and Ser96 each coordinate L-citrulline. Gly121 provides a ligand contact to ATP. L-aspartate contacts are provided by Thr123, Asn127, and Asp128. Asn127 contributes to the L-citrulline binding site. L-citrulline contacts are provided by Arg131, Ser182, Ser191, Glu267, and Tyr279.

Belongs to the argininosuccinate synthase family. Type 1 subfamily. As to quaternary structure, homotetramer.

The protein localises to the cytoplasm. It catalyses the reaction L-citrulline + L-aspartate + ATP = 2-(N(omega)-L-arginino)succinate + AMP + diphosphate + H(+). Its pathway is amino-acid biosynthesis; L-arginine biosynthesis; L-arginine from L-ornithine and carbamoyl phosphate: step 2/3. This is Argininosuccinate synthase from Paracoccus denitrificans (strain Pd 1222).